The chain runs to 694 residues: MGSYSAGFPGSLDWFDFPGLGNGSYLNDQPLLDIGSVPPPLDPYPQQNLASADADFSDSVLKYISQVLMEEDMEDKPCMFHDALSLQAAEKSLYEALGEKYPVDDSDQPLTTTTSLAQLVSSPGGSSYASSTTTTSSDSQWSFDCLENNRPSSWLQTPIPSNFIFQSTSTRASSGNAVFGSSFSGDLVSNMFNDTDLALQFKKGMEEASKFLPKSSQLVIDNSVPNRLTGKKSHWREEEHLTEERSKKQSAIYVDETDELTDMFDNILIFGEAKEQPVCILNESFPKEPAKASTFSKSPKGEKPEASGNSYTKETPDLRTMLVSCAQAVSINDRRTADELLSRIRQHSSSYGDGTERLAHYFANSLEARLAGIGTQVYTALSSKKTSTSDMLKAYQTYISVCPFKKIAIIFANHSIMRLASSANAKTIHIIDFGISDGFQWPSLIHRLAWRRGSSCKLRITGIELPQRGFRPAEGVIETGRRLAKYCQKFNIPFEYNAIAQKWESIKLEDLKLKEGEFVAVNSLFRFRNLLDETVAVHSPRDTVLKLIRKIKPDVFIPGILSGSYNAPFFVTRFREVLFHYSSLFDMCDTNLTREDPMRVMFEKEFYGREIMNVVACEGTERVERPESYKQWQARAMRAGFRQIPLEKELVQKLKLMVESGYKPKEFDVDQDCHWLLQGWKGRIVYGSSIWVPL.

Residues 289–313 form a disordered region; that stretch reads PAKASTFSKSPKGEKPEASGNSYTK. Residues 309-692 enclose the GRAS domain; that stretch reads NSYTKETPDL…RIVYGSSIWV (384 aa). Positions 316-376 are leucine repeat I (LRI); that stretch reads PDLRTMLVSC…EARLAGIGTQ (61 aa). Residues 395-462 are VHIID; sequence YQTYISVCPF…GSSCKLRITG (68 aa). Residues 428–432 carry the VHIID motif; it reads IHIID. A leucine repeat II (LRII) region spans residues 478–510; the sequence is ETGRRLAKYCQKFNIPFEYNAIAQKWESIKLED. Positions 519–613 are PFYRE; it reads VAVNSLFRFR…KEFYGREIMN (95 aa). The segment at 616 to 692 is SAW; that stretch reads ACEGTERVER…RIVYGSSIWV (77 aa).

Belongs to the GRAS family. Interacts with SNRNP35.

The protein localises to the nucleus. Its function is as follows. Probable transcription factor involved in plant development. The polypeptide is Scarecrow-like protein 33 (SCL33) (Arabidopsis thaliana (Mouse-ear cress)).